The primary structure comprises 113 residues: Large ribosomal subunit protein uL22 (113 aa).

It belongs to the universal ribosomal protein uL22 family. Part of the 50S ribosomal subunit.

In terms of biological role, this protein binds specifically to 23S rRNA; its binding is stimulated by other ribosomal proteins, e.g. L4, L17, and L20. It is important during the early stages of 50S assembly. It makes multiple contacts with different domains of the 23S rRNA in the assembled 50S subunit and ribosome. Its function is as follows. The globular domain of the protein is located near the polypeptide exit tunnel on the outside of the subunit, while an extended beta-hairpin is found that lines the wall of the exit tunnel in the center of the 70S ribosome. The polypeptide is Large ribosomal subunit protein uL22 (Bacillus mycoides (strain KBAB4) (Bacillus weihenstephanensis)).